We begin with the raw amino-acid sequence, 187 residues long: Calcium and integrin-binding family member 2 (187 aa).

3 consecutive EF-hand domains span residues 66 to 101 (RENP…LCES), 103 to 138 (PREL…LTKS), and 144 to 179 (EVVL…APDF). Ca(2+) is bound by residues D116, N118, D120, D127, D157, D159, D161, K163, and D168.

As to quaternary structure, monomer. Homodimer. Interacts with WHRN and MYO7A. Interacts with ITGA2B (via C-terminus cytoplasmic tail region); the interactions are stabilized/increased in a calcium and magnesium-dependent manner. Interacts with ITGA7 (via C-terminus cytoplasmic tail region); the interactions are stabilized/increased in a calcium and magnesium-dependent manner. Interacts with TMC1. Interacts with TMC2. As to expression, widely expressed.

It is found in the cytoplasm. It localises to the cell projection. Its subcellular location is the stereocilium. The protein localises to the photoreceptor inner segment. The protein resides in the cilium. It is found in the photoreceptor outer segment. It localises to the cell membrane. Its subcellular location is the sarcolemma. Its function is as follows. Calcium- and integrin-binding protein that plays a role in intracellular calcium homeostasis. Acts as an auxiliary subunit of the sensory mechanoelectrical transduction (MET) channel in hair cells. Essential for mechanoelectrical transduction (MET) currents in auditory hair cells and thereby required for hearing. Regulates the function of hair cell mechanotransduction by controlling the distribution of transmembrane channel-like proteins TMC1 and TMC2, and by regulating the function of the MET channels in hair cells. Required for the maintenance of auditory hair cell stereocilia bundle morphology and function and for hair-cell survival in the cochlea. Critical for proper photoreceptor cell maintenance and function. Plays a role in intracellular calcium homeostasis by decreasing ATP-induced calcium release. This chain is Calcium and integrin-binding family member 2 (CIB2), found in Homo sapiens (Human).